The primary structure comprises 502 residues: MEIRAEEISEIIRKQIKEYGSEVEVAETGTIISIGDGIARIHGLDKAMAGELLEFPGGISGMALNLEEDNVGAAILGEFSEIKEGDTVKRTNRIVEVPVGEALIGRVVNAIGQPIDGKGPINTDKFGKVEVKAPGIVKRKSVHQPMQTGLKAIDAMVPIGRGQRELIIGDRQTGKTAVAIDTIINQKGGDVVCIYVAIGQKRSTVAQVVSKLQEHGAMDYTIIVAATASEPAPLQFISPYTGVTMGEYFRDNGKHALIIYDDLSKQAVAYRQLSLLLRRPPGREAYPGDVFYLHSRLLERACKVSDACGAGSLTALPIIETQAGDVSAYIPTNVISITDGQIYLESDLFYSGVRPAINVGLSVSRVGGSAQVKAMKQVAGTLRLSLAQYREMAAFAQFGSDLDKATQMQLARGERLVEVLKQPQYRPIPNEKQVLIIFAANNGYIDEYPVASLGRYESELYSFFDARKSDLLAELRDKKAIDDDIKAKIVSALEEFKKEFTA.

An ATP-binding site is contributed by 169 to 176 (GDRQTGKT).

The protein belongs to the ATPase alpha/beta chains family. F-type ATPases have 2 components, CF(1) - the catalytic core - and CF(0) - the membrane proton channel. CF(1) has five subunits: alpha(3), beta(3), gamma(1), delta(1), epsilon(1). CF(0) has three main subunits: a(1), b(2) and c(9-12). The alpha and beta chains form an alternating ring which encloses part of the gamma chain. CF(1) is attached to CF(0) by a central stalk formed by the gamma and epsilon chains, while a peripheral stalk is formed by the delta and b chains.

Its subcellular location is the cell inner membrane. It catalyses the reaction ATP + H2O + 4 H(+)(in) = ADP + phosphate + 5 H(+)(out). Produces ATP from ADP in the presence of a proton gradient across the membrane. The alpha chain is a regulatory subunit. The chain is ATP synthase subunit alpha from Geotalea daltonii (strain DSM 22248 / JCM 15807 / FRC-32) (Geobacter daltonii).